The following is a 357-amino-acid chain: DNA replication and repair protein RecF (357 aa).

Glycine 30–threonine 37 is a binding site for ATP.

Belongs to the RecF family.

Its subcellular location is the cytoplasm. Functionally, the RecF protein is involved in DNA metabolism; it is required for DNA replication and normal SOS inducibility. RecF binds preferentially to single-stranded, linear DNA. It also seems to bind ATP. In Citrobacter koseri (strain ATCC BAA-895 / CDC 4225-83 / SGSC4696), this protein is DNA replication and repair protein RecF.